Consider the following 512-residue polypeptide: ATP synthase subunit alpha 1 (512 aa).

An ATP-binding site is contributed by 169–176 (GDRQTGKT).

It belongs to the ATPase alpha/beta chains family. As to quaternary structure, F-type ATPases have 2 components, CF(1) - the catalytic core - and CF(0) - the membrane proton channel. CF(1) has five subunits: alpha(3), beta(3), gamma(1), delta(1), epsilon(1). CF(0) has four main subunits: a(1), b(1), b'(1) and c(9-12).

The protein resides in the cell inner membrane. It carries out the reaction ATP + H2O + 4 H(+)(in) = ADP + phosphate + 5 H(+)(out). Its function is as follows. Produces ATP from ADP in the presence of a proton gradient across the membrane. The alpha chain is a regulatory subunit. The chain is ATP synthase subunit alpha 1 from Cereibacter sphaeroides (strain ATCC 17029 / ATH 2.4.9) (Rhodobacter sphaeroides).